Here is a 262-residue protein sequence, read N- to C-terminus: Small ribosomal subunit protein eS4 (262 aa).

The S4 RNA-binding domain maps to 42 to 105 (LPLIIMLRNR…GEFFRLLYDV (64 aa)).

This sequence belongs to the eukaryotic ribosomal protein eS4 family.

The sequence is that of Small ribosomal subunit protein eS4 (RpS4) from Ixodes scapularis (Black-legged tick).